A 447-amino-acid chain; its full sequence is Glutamate--tRNA ligase 1 (447 aa).

The 'HIGH' region motif lies at 10–20 (PSPTGMLHVGN). The 'KMSKS' region signature appears at 240–244 (KISKR). Lysine 243 is a binding site for ATP.

It belongs to the class-I aminoacyl-tRNA synthetase family. Glutamate--tRNA ligase type 1 subfamily. In terms of assembly, monomer.

Its subcellular location is the cytoplasm. It carries out the reaction tRNA(Glu) + L-glutamate + ATP = L-glutamyl-tRNA(Glu) + AMP + diphosphate. In terms of biological role, catalyzes the attachment of glutamate to tRNA(Glu) in a two-step reaction: glutamate is first activated by ATP to form Glu-AMP and then transferred to the acceptor end of tRNA(Glu). The polypeptide is Glutamate--tRNA ligase 1 (Rickettsia rickettsii (strain Sheila Smith)).